The following is a 224-amino-acid chain: CRIB domain-containing protein RIC1 (224 aa).

In terms of domain architecture, CRIB spans 29–42 (IGFPTDVKHVAHIG). The tract at residues 38 to 224 (VAHIGSDGPT…SVDTTCNDII (187 aa)) is disordered. Polar residues-rich tracts occupy residues 69–84 (SRGN…TNQR), 114–132 (PNHN…ASSD), 144–155 (AHGSTDSSNDQE), and 215–224 (SVDTTCNDII).

As to quaternary structure, interacts with ARAC11/ROP1. In terms of tissue distribution, expressed in columella cells from the root tip and epidermal cells at the base of lateral roots, leaves, stems, flowers, anthers, pollen and siliques.

The protein localises to the cytoplasm. The protein resides in the cytoskeleton. In terms of biological role, functions as a downstream effector of Rho-related GTP binding proteins of the 'Rho of Plants' (ROPs) family. Participates in the propagation of ROP GTPase signals in specific cellular responses. Required for cortical microtubule organization. Promotes microtubule bundling and formation of well-ordered microtubule arrays in the neck region of pavement cells. This restricts cell lateral expansion to generate the narrow neck morphology of pavement cells. Its function is inhibited when it interacts with activated ARAC4/ROP2. Represses ARAC4/ROP2 activation and antagonizes the RIC4-actin pathway that promotes the assembly of cortical actin microfilaments. Acts as a downstream effector of ARAC3/ROP6 which functions in a signaling pathway that negatively regulates clathrin-mediated endocytosis and internalization of PIN1 and PIN2. Required for the asymmetric auxin distribution during root gravitropism and vascular patterning. Positively regulates auxin responses, but negatively regulates ABA responses during lateral root development and primary root elongation. In Arabidopsis thaliana (Mouse-ear cress), this protein is CRIB domain-containing protein RIC1 (RIC1).